We begin with the raw amino-acid sequence, 519 residues long: Trichothecene 15-O-acetyltransferase TRI3 (519 aa).

H414 lines the 15-deacetylcalonectrin pocket.

It belongs to the trichothecene O-acetyltransferase family.

It participates in sesquiterpene biosynthesis; trichothecene biosynthesis. In terms of biological role, 15-O-acetyltransferase; part of the core gene cluster that mediates the biosynthesis of trichothecenes, a very large family of chemically related bicyclic sesquiterpene compounds acting as mycotoxins, including T2-toxin. The biosynthesis of trichothecenes begins with the cyclization of farnesyl diphosphate to trichodiene and is catalyzed by the trichodiene synthase TRI5. Trichodiene undergoes a series of oxygenations catalyzed by the cytochrome P450 monooxygenase TRI4. TRI4 controls the addition of four oxygens at C-2, C-3, C-11, and the C-12, C-13-epoxide to form the intermediate isotrichotriol. Isotrichotriol then undergoes a non-enzymatic isomerization and cyclization to form isotrichodermol. During this process, the oxygen at the C-2 position becomes the pyran ring oxygen and the hydroxyl group at C-11 is lost. More complex type A trichothecenes are built by modifying isotrichodermol through a series of paired hydroxylation and acetylation or acylation steps. Isotrichodermol is converted to isotrichodermin by the acetyltransferase TRI101. TRI101 encodes a C-3 transacetylase that acts as a self-protection or resistance factor during biosynthesis and that the presence of a free C-3 hydroxyl group is a key component of Fusarium trichothecene phytotoxicity. A second hydroxyl group is added to C-15 by the trichothecene C-15 hydroxylase TRI11, producing 15-decalonectrin, which is then acetylated by TRI3, producing calonectrin. A third hydroxyl group is added at C-4 by the cytochrome P450 monooxygenase TRI13, converting calonectrin to 3,15-diacetoxyspirpenol, which is subsequently acetylated by the acetyltransferase TRI7. A fourth hydroxyl group is added to C-8 by the cytochrome P450 monooxygenase TRI1, followed by the addition of an isovaleryl moiety by TRI16. Finally, the acetyl group is removed from the C-3 position by the trichothecene C-3 esterase TRI8 to produce T-2 toxin. In Fusarium sporotrichioides, this protein is Trichothecene 15-O-acetyltransferase TRI3.